The primary structure comprises 472 residues: Probable sterol O-acyltransferase 2 (472 aa).

Ser-12 carries the phosphoserine modification. A run of 3 helical transmembrane segments spans residues 61–81, 111–131, and 135–155; these read FTGFFVLFWVAVSIMIFMSFL, LAMSSMFLLAFPFQKIFALGY, and YGLGVYLYSILILLFLSHCVL. A glycan (N-linked (GlcNAc...) asparagine) is linked at Asn-161. Residues 170-190 traverse the membrane as a helical segment; sequence FILHSMVILMKLHSYNVVNGW. Residue Asn-233 is glycosylated (N-linked (GlcNAc...) asparagine). The next 2 membrane-spanning stretches (helical) occupy residues 262–282 and 317–337; these read IHYLIECALGTFGCIFLLVII and TVAFLMFPFMLSFLLVFWVIF. N-linked (GlcNAc...) asparagine glycosylation occurs at Asn-342. The short motif at 355–361 is the FYXDWWN motif element; that stretch reads FYDDWWN. His-409 is an active-site residue. A helical transmembrane segment spans residues 452-472; that stretch reads IAFWFSIIIGIALIAALYILF.

Belongs to the membrane-bound acyltransferase family. Sterol o-acyltransferase subfamily.

The protein localises to the endoplasmic reticulum membrane. Functionally, sterol O-acyltransferase that catalyzes the formation of stery esters. In Schizosaccharomyces pombe (strain 972 / ATCC 24843) (Fission yeast), this protein is Probable sterol O-acyltransferase 2 (are2).